The chain runs to 1903 residues: Plexin-A4 (1903 aa).

The N-terminal stretch at 1 to 26 (MAFHNRRWNFTFSCCVVVLLLPLVAA) is a signal peptide. Residues 27–515 (RPQQPSAATR…SESQLTRVPV (489 aa)) enclose the Sema domain. The Extracellular segment spans residues 27 to 1246 (RPQQPSAATR…ITSDSPLSST (1220 aa)). 2 disulfide bridges follow: Cys-97–Cys-106 and Cys-132–Cys-140. A glycan (N-linked (GlcNAc...) asparagine) is linked at Asn-166. 3 cysteine pairs are disulfide-bonded: Cys-291–Cys-413, Cys-307–Cys-364, and Cys-382–Cys-401. N-linked (GlcNAc...) asparagine glycosylation is present at Asn-450. A PSI 1 domain is found at 517–567 (ACEQYSSCNECLGSGDPHCGWCVLHSMCTRKEKCERSSEPRRFASNIKQCV). Intrachain disulfides connect Cys-518–Cys-535, Cys-524–Cys-566, Cys-527–Cys-544, and Cys-538–Cys-550. 2 N-linked (GlcNAc...) asparagine glycosylation sites follow: Asn-575 and Asn-600. Cys-601 and Cys-620 are oxidised to a cystine. N-linked (GlcNAc...) asparagine glycans are attached at residues Asn-656, Asn-663, Asn-764, and Asn-772. The PSI 2 domain occupies 663–710 (NCSVHKSCLSCVGSPYQCHWCKYRHTCTHDPSSCSFQEGRVKQPEECP). Positions 811-864 (KCDARRESCGLCLKADPLFGCVWCKGENRCSLKQHCSYPQSMWLEHNGINSKCT) constitute a PSI 3 domain. IPT/TIG domains follow at residues 866 to 960 (PRIT…YYFV), 962 to 1046 (PQLL…FEYV), 1049 to 1148 (PTIT…FVYY), and 1151 to 1246 (PVFE…LSST). 6 N-linked (GlcNAc...) asparagine glycosylation sites follow: Asn-981, Asn-992, Asn-1025, Asn-1141, Asn-1189, and Asn-1214. A helical membrane pass occupies residues 1247–1267 (AVISIAGAGGLLIFFIVIVLI). Over 1268-1903 (AYKRKSRESD…QVVAFMSLES (636 aa)) the chain is Cytoplasmic.

Belongs to the plexin family.

It localises to the cell membrane. Its function is as follows. Involved in the development of primary sensory neurons especially in branching of the peripheral axons. Interacts with the SLIT2 signaling specifically to promote axonal branching of Rohon-Beard neurons and the trigeminal sensory ganglion neurons. This Danio rerio (Zebrafish) protein is Plexin-A4 (plxna4).